The following is a 283-amino-acid chain: Putative transposase InsK for insertion sequence element IS150 (283 aa).

An Integrase catalytic domain is found at 117–279 (KATRPNEKWV…TPIEYRNQTY (163 aa)).

Belongs to the transposase IS3/IS150/IS904 family.

Involved in the transposition of the insertion sequence IS150. This Escherichia coli (strain K12) protein is Putative transposase InsK for insertion sequence element IS150 (insK).